Reading from the N-terminus, the 907-residue chain is MESAIAEGGASRFSASSGGGGSRGAPQHYPKTAGNSEFLGKTPGQNAQKWIPARSTRRDDNSAANNSANEKERHDAIFRKVRGILNKLTPEKFDKLCLELLNVGVESKLILKGVILLIVDKALEEPKYSSLYAQLCLRLAEDAPNFDGPAAEGQPGQKQSTTFRRLLISKLQDEFENRTRNVDVYDKRENPLLPEEEEQRAIAKIKMLGNIKFIGELGKLDLIHESILHKCIKTLLEKKKRVQLQDMGEDLECLCQIMRTVGPRLDHERAKSLMDQYFARMCSLMLSKELPARIRFLLQDTVELREHHWVPRKAFLDNGPKTINQIRQDAVKDLGVFIPAPMAQGMRSDFFLEGPFMPPRMKMDRDPLGGLADMFGQMPGSGIGTGPGVIQDRFSPTMGRHRSNQLFNGHGGHIMPPTQSQFGEMGGKFMKSQGLSQLYHNQSQGLLSQLQGQSKDMPPRFSKKGQLNADEISLRPAQSFLMNKNQVPKLQPQITMIPPSAQPPRTQTPPLGQTPQLGLKTNPPLIQEKPAKTSKKPPPSKEELLKLTETVVTEYLNSGNANEAVNGVKEMRAPKHFLPEMLSKVIILSLDRSDEDKEKASSLISLLKQEGIGTSDNFMQAFLNVLDQCPKLEVDIPLVKSYLAQFAARAIISELVSISELAQPLESGTHFPLFLLCLQQLAKLQDREWLTELFQQSKVNMQKMLPEIDQNKDRMLEILEGKGLSFLFPLLKLEKELLKQIKLDPSPQTIYKWIKDNISPKLHVDKGFVNILMTSFLQYISSEVNPPSDETDSSSAPSKEQLEQEKQLLLSFKPVMQKFLHDHVDLQVSALYALQVHCYNSNFPKGMLLRFFVHFYDMEIIEEEAFLAWKEDITQEFPGKGKALFQVNQWLTWLETAEEEESEEEAD.

Met-1 carries the N-acetylmethionine modification. Positions 1–71 (MESAIAEGGA…SAANNSANEK (71 aa)) are disordered. Ser-11 carries the post-translational modification Phosphoserine. The MIF4G domain maps to 78-308 (FRKVRGILNK…QDTVELREHH (231 aa)). Thr-89 carries the phosphothreonine modification. Arg-360 carries the post-translational modification Omega-N-methylarginine. Ser-395 is modified (phosphoserine). N6-methyllysine is present on Lys-431. At Ser-443 the chain carries Phosphoserine. Residues 498–541 (PPSAQPPRTQTPPLGQTPQLGLKTNPPLIQEKPAKTSKKPPPSK) form a disordered region. Over residues 503-516 (PPRTQTPPLGQTPQ) the composition is skewed to polar residues. Omega-N-methylarginine is present on Arg-505. Thr-508 and Thr-514 each carry phosphothreonine. The region spanning 543 to 666 (ELLKLTETVV…SISELAQPLE (124 aa)) is the MI domain. Lys-575 is covalently cross-linked (Glycyl lysine isopeptide (Lys-Gly) (interchain with G-Cter in SUMO2)). In terms of domain architecture, W2 spans 720 to 904 (EGKGLSFLFP…ETAEEEESEE (185 aa)). Ser-902 is modified (phosphoserine).

This sequence belongs to the eukaryotic initiation factor 4G family. In terms of assembly, interacts with the serine/threonine protein kinases MKNK1 and MKNK2. Binds EIF4A and EIF3. Interacts with MIF4GD. Interacts with DAZAP2. In terms of processing, phosphorylation; hyperphosphorylated during mitosis.

Its function is as follows. Appears to play a role in the switch from cap-dependent to IRES-mediated translation during mitosis, apoptosis and viral infection. Cleaved by some caspases and viral proteases. The sequence is that of Eukaryotic translation initiation factor 4 gamma 2 from Oryctolagus cuniculus (Rabbit).